A 187-amino-acid chain; its full sequence is MATTADFKNGMVLMIDGKLQQIVEFQHVKPGKGPAFVRTKLKDVVSGKTVDKTFNAGVKVEQATVDRRDMTYLYNDGSAYVLMDDKTFEQVELQPELMGDGAKFLLENSRVNVSFHDGQALFAELPANVDLKIEHTDPGLQGDRSTGGSKPATLETGAEIQVPLFIETGNVVKVDTRTGEYLSRVTQ.

This sequence belongs to the elongation factor P family.

The protein resides in the cytoplasm. It functions in the pathway protein biosynthesis; polypeptide chain elongation. Its function is as follows. Involved in peptide bond synthesis. Stimulates efficient translation and peptide-bond synthesis on native or reconstituted 70S ribosomes in vitro. Probably functions indirectly by altering the affinity of the ribosome for aminoacyl-tRNA, thus increasing their reactivity as acceptors for peptidyl transferase. The protein is Elongation factor P of Corynebacterium urealyticum (strain ATCC 43042 / DSM 7109).